Consider the following 163-residue polypeptide: Putative pre-16S rRNA nuclease (163 aa).

The protein belongs to the YqgF nuclease family.

Its subcellular location is the cytoplasm. Functionally, could be a nuclease involved in processing of the 5'-end of pre-16S rRNA. This chain is Putative pre-16S rRNA nuclease, found in Rhodopseudomonas palustris (strain BisB18).